A 608-amino-acid polypeptide reads, in one-letter code: Glutamine--fructose-6-phosphate aminotransferase [isomerizing] (608 aa).

Catalysis depends on Cys2, which acts as the Nucleophile; for GATase activity. The Glutamine amidotransferase type-2 domain maps to 2–217 (CGIVGIVGNQ…DGDWAVIGKT (216 aa)). SIS domains lie at 281-422 (ISDA…ARGT) and 456-598 (LSRE…VDQP). Lys603 acts as the For Fru-6P isomerization activity in catalysis.

Its subcellular location is the cytoplasm. The enzyme catalyses D-fructose 6-phosphate + L-glutamine = D-glucosamine 6-phosphate + L-glutamate. Involved in the production of the root hair deformation (HAD) factor specifically on medicago. The chain is Glutamine--fructose-6-phosphate aminotransferase [isomerizing] (nodM) from Rhizobium meliloti (strain 1021) (Ensifer meliloti).